The chain runs to 248 residues: Small ribosomal subunit protein eS6 (248 aa).

The segment at 215–248 (VQRKKESKAKREEAKRRRSASIRESKSSVSSDKK) is disordered. Positions 223–248 (AKREEAKRRRSASIRESKSSVSSDKK) are enriched in basic and acidic residues. 6 positions are modified to phosphoserine: S233, S235, S239, S242, S244, and S245.

Belongs to the eukaryotic ribosomal protein eS6 family. In terms of assembly, component of the small ribosomal subunit. Part of the small subunit (SSU) processome, composed of more than 70 proteins and the RNA chaperone small nucleolar RNA (snoRNA) U3. Ribosomal protein S6 is the major substrate of protein kinases in eukaryote ribosomes. The phosphorylation is stimulated by growth factors, tumor promoting agents, and mitogens. It is dephosphorylated at growth arrest.

It is found in the cytoplasm. The protein resides in the nucleus. It localises to the nucleolus. Functionally, component of the 40S small ribosomal subunit. Plays an important role in controlling cell growth and proliferation through the selective translation of particular classes of mRNA. Part of the small subunit (SSU) processome, first precursor of the small eukaryotic ribosomal subunit. During the assembly of the SSU processome in the nucleolus, many ribosome biogenesis factors, an RNA chaperone and ribosomal proteins associate with the nascent pre-rRNA and work in concert to generate RNA folding, modifications, rearrangements and cleavage as well as targeted degradation of pre-ribosomal RNA by the RNA exosome. This Drosophila melanogaster (Fruit fly) protein is Small ribosomal subunit protein eS6 (RpS6).